The primary structure comprises 225 residues: NAD(P)H-quinone oxidoreductase subunit K, chloroplastic (225 aa).

Residues Cys43, Cys44, Cys108, and Cys139 each coordinate [4Fe-4S] cluster.

It belongs to the complex I 20 kDa subunit family. In terms of assembly, NDH is composed of at least 16 different subunits, 5 of which are encoded in the nucleus. [4Fe-4S] cluster is required as a cofactor.

The protein resides in the plastid. Its subcellular location is the chloroplast thylakoid membrane. The enzyme catalyses a plastoquinone + NADH + (n+1) H(+)(in) = a plastoquinol + NAD(+) + n H(+)(out). It catalyses the reaction a plastoquinone + NADPH + (n+1) H(+)(in) = a plastoquinol + NADP(+) + n H(+)(out). In terms of biological role, NDH shuttles electrons from NAD(P)H:plastoquinone, via FMN and iron-sulfur (Fe-S) centers, to quinones in the photosynthetic chain and possibly in a chloroplast respiratory chain. The immediate electron acceptor for the enzyme in this species is believed to be plastoquinone. Couples the redox reaction to proton translocation, and thus conserves the redox energy in a proton gradient. This chain is NAD(P)H-quinone oxidoreductase subunit K, chloroplastic, found in Arabis hirsuta (Hairy rock-cress).